Consider the following 305-residue polypeptide: Ornithine carbamoyltransferase (305 aa).

Carbamoyl phosphate contacts are provided by residues 54 to 57, Gln81, Arg105, and 132 to 135; these read STRT and HPCQ. Residues Asn163, Asp220, and 224–225 contribute to the L-ornithine site; that span reads SM. Carbamoyl phosphate contacts are provided by residues 260 to 261 and Arg288; that span reads CL.

The protein belongs to the aspartate/ornithine carbamoyltransferase superfamily. OTCase family.

Its subcellular location is the cytoplasm. The catalysed reaction is carbamoyl phosphate + L-ornithine = L-citrulline + phosphate + H(+). Its pathway is amino-acid biosynthesis; L-arginine biosynthesis; L-arginine from L-ornithine and carbamoyl phosphate: step 1/3. In terms of biological role, reversibly catalyzes the transfer of the carbamoyl group from carbamoyl phosphate (CP) to the N(epsilon) atom of ornithine (ORN) to produce L-citrulline. The polypeptide is Ornithine carbamoyltransferase (Chromohalobacter salexigens (strain ATCC BAA-138 / DSM 3043 / CIP 106854 / NCIMB 13768 / 1H11)).